Consider the following 304-residue polypeptide: uncharacterized protein (304 aa).

The segment at M1–S183 is disordered. Positions P132–S166 are enriched in low complexity. 2 helical membrane passes run L206–V226 and F265–V285.

The protein to M.leprae ML0007.

It localises to the cell membrane. This is an uncharacterized protein from Mycobacterium tuberculosis (strain ATCC 25618 / H37Rv).